The chain runs to 161 residues: 6,7-dimethyl-8-ribityllumazine synthase (161 aa).

Residues W26, 58-60 (AFE), and 81-83 (VVI) contribute to the 5-amino-6-(D-ribitylamino)uracil site. (2S)-2-hydroxy-3-oxobutyl phosphate is bound at residue 86–87 (GT). H89 functions as the Proton donor in the catalytic mechanism. A 5-amino-6-(D-ribitylamino)uracil-binding site is contributed by F114. Residue R128 participates in (2S)-2-hydroxy-3-oxobutyl phosphate binding.

This sequence belongs to the DMRL synthase family.

It catalyses the reaction (2S)-2-hydroxy-3-oxobutyl phosphate + 5-amino-6-(D-ribitylamino)uracil = 6,7-dimethyl-8-(1-D-ribityl)lumazine + phosphate + 2 H2O + H(+). It functions in the pathway cofactor biosynthesis; riboflavin biosynthesis; riboflavin from 2-hydroxy-3-oxobutyl phosphate and 5-amino-6-(D-ribitylamino)uracil: step 1/2. Catalyzes the formation of 6,7-dimethyl-8-ribityllumazine by condensation of 5-amino-6-(D-ribitylamino)uracil with 3,4-dihydroxy-2-butanone 4-phosphate. This is the penultimate step in the biosynthesis of riboflavin. This is 6,7-dimethyl-8-ribityllumazine synthase from Nocardioides sp. (strain ATCC BAA-499 / JS614).